Reading from the N-terminus, the 145-residue chain is 3-hydroxyacyl-[acyl-carrier-protein] dehydratase FabZ (145 aa).

The active site involves His-48.

The protein belongs to the thioester dehydratase family. FabZ subfamily.

It localises to the cytoplasm. The enzyme catalyses a (3R)-hydroxyacyl-[ACP] = a (2E)-enoyl-[ACP] + H2O. Functionally, involved in unsaturated fatty acids biosynthesis. Catalyzes the dehydration of short chain beta-hydroxyacyl-ACPs and long chain saturated and unsaturated beta-hydroxyacyl-ACPs. This Marinomonas sp. (strain MWYL1) protein is 3-hydroxyacyl-[acyl-carrier-protein] dehydratase FabZ.